A 193-amino-acid chain; its full sequence is Xanthine phosphoribosyltransferase (193 aa).

Xanthine-binding residues include leucine 20 and asparagine 27. 128 to 132 is a 5-phospho-alpha-D-ribose 1-diphosphate binding site; sequence ANGDA. Lysine 156 serves as a coordination point for xanthine.

It belongs to the purine/pyrimidine phosphoribosyltransferase family. Xpt subfamily. In terms of assembly, homodimer.

The protein resides in the cytoplasm. The enzyme catalyses XMP + diphosphate = xanthine + 5-phospho-alpha-D-ribose 1-diphosphate. It participates in purine metabolism; XMP biosynthesis via salvage pathway; XMP from xanthine: step 1/1. Functionally, converts the preformed base xanthine, a product of nucleic acid breakdown, to xanthosine 5'-monophosphate (XMP), so it can be reused for RNA or DNA synthesis. The polypeptide is Xanthine phosphoribosyltransferase (Staphylococcus saprophyticus subsp. saprophyticus (strain ATCC 15305 / DSM 20229 / NCIMB 8711 / NCTC 7292 / S-41)).